A 235-amino-acid polypeptide reads, in one-letter code: Putative cobalt transport protein CbiM 2 (235 aa).

7 helical membrane-spanning segments follow: residues 9–29 (PAGW…MGII), 41–61 (YLPL…LKLP), 80–100 (FGYC…ALLL), 107–127 (TMGA…YAVY), 135–155 (INIY…TYII), 160–180 (LALA…AFFS), and 181–201 (IFAI…ALVF).

The protein belongs to the CbiM family. In terms of assembly, forms an energy-coupling factor (ECF) transporter complex composed of an ATP-binding protein (A component, CbiO), a transmembrane protein (T component, CbiQ) and 2 possible substrate-capture proteins (S components, CbiM and CbiN) of unknown stoichimetry.

The protein localises to the cell membrane. It functions in the pathway cofactor biosynthesis; adenosylcobalamin biosynthesis. In terms of biological role, part of the energy-coupling factor (ECF) transporter complex CbiMNOQ involved in cobalt import. In Methanosphaerula palustris (strain ATCC BAA-1556 / DSM 19958 / E1-9c), this protein is Putative cobalt transport protein CbiM 2.